Reading from the N-terminus, the 408-residue chain is Multidrug resistance protein MdtG (408 aa).

Helical transmembrane passes span 16–36, 58–78, 92–112, 115–135, 146–166, 173–193, 224–244, 256–276, 290–310, and 378–398; these read LIVA…VMPF, IVFS…GGLA, LGMG…QFLI, ALLG…ATQV, TLST…GLLA, PVFF…LFCI, LFVT…ILTL, VAFI…LSAP, ILIT…YVQT, and AVFL…WNSL.

The protein belongs to the major facilitator superfamily. DHA1 family. MdtG (TC 2.A.1.2.20) subfamily.

It localises to the cell inner membrane. Its function is as follows. Confers resistance to fosfomycin and deoxycholate. The sequence is that of Multidrug resistance protein MdtG from Escherichia coli O17:K52:H18 (strain UMN026 / ExPEC).